Reading from the N-terminus, the 266-residue chain is Electron transfer flavoprotein subunit beta (266 aa).

Belongs to the ETF beta-subunit/FixA family. Heterodimer of an alpha and a beta subunit. FAD is required as a cofactor. The cofactor is AMP.

Functionally, the electron transfer flavoprotein serves as a specific electron acceptor for other dehydrogenases. It transfers the electrons to the main respiratory chain via ETF-ubiquinone oxidoreductase (ETF dehydrogenase). The polypeptide is Electron transfer flavoprotein subunit beta (etfB) (Mycobacterium bovis (strain ATCC BAA-935 / AF2122/97)).